The chain runs to 508 residues: Maturase K (508 aa).

Belongs to the intron maturase 2 family. MatK subfamily.

It localises to the plastid. Its subcellular location is the chloroplast. Usually encoded in the trnK tRNA gene intron. Probably assists in splicing its own and other chloroplast group II introns. The polypeptide is Maturase K (Stewartia pseudocamellia (Japanese stewartia)).